The sequence spans 53 residues: ATP synthase protein 8 (53 aa).

Residues 4 to 24 (MAPISWLLLFIVFSITFILFC) form a helical membrane-spanning segment.

This sequence belongs to the ATPase protein 8 family. In terms of assembly, F-type ATPases have 2 components, CF(1) - the catalytic core - and CF(0) - the membrane proton channel.

It is found in the mitochondrion membrane. Mitochondrial membrane ATP synthase (F(1)F(0) ATP synthase or Complex V) produces ATP from ADP in the presence of a proton gradient across the membrane which is generated by electron transport complexes of the respiratory chain. F-type ATPases consist of two structural domains, F(1) - containing the extramembraneous catalytic core and F(0) - containing the membrane proton channel, linked together by a central stalk and a peripheral stalk. During catalysis, ATP synthesis in the catalytic domain of F(1) is coupled via a rotary mechanism of the central stalk subunits to proton translocation. Part of the complex F(0) domain. Minor subunit located with subunit a in the membrane. This Drosophila yakuba (Fruit fly) protein is ATP synthase protein 8 (mt:ATPase8).